The sequence spans 163 residues: Cyclic pyranopterin monophosphate synthase (163 aa).

Substrate contacts are provided by residues 75–77 (MCH) and 113–114 (ME). The active site involves D128.

It belongs to the MoaC family. Homohexamer; trimer of dimers.

It carries out the reaction (8S)-3',8-cyclo-7,8-dihydroguanosine 5'-triphosphate = cyclic pyranopterin phosphate + diphosphate. The protein operates within cofactor biosynthesis; molybdopterin biosynthesis. Its function is as follows. Catalyzes the conversion of (8S)-3',8-cyclo-7,8-dihydroguanosine 5'-triphosphate to cyclic pyranopterin monophosphate (cPMP). This is Cyclic pyranopterin monophosphate synthase from Desulforapulum autotrophicum (strain ATCC 43914 / DSM 3382 / VKM B-1955 / HRM2) (Desulfobacterium autotrophicum).